The following is a 263-amino-acid chain: Ribosomal RNA large subunit methyltransferase E (263 aa).

Positions 48, 50, 68, 88, and 118 each coordinate S-adenosyl-L-methionine. The active-site Proton acceptor is the Lys158. The region spanning 205 to 263 (PVREGDIVEATIEDIGEEGDGIAKVENFTVFVSGVEDGETVEVRIDDVKPRYAFAEPVE) is the TRAM domain.

The protein belongs to the class I-like SAM-binding methyltransferase superfamily. RNA methyltransferase RlmE family.

The protein localises to the cytoplasm. It carries out the reaction uridine(2552) in 23S rRNA + S-adenosyl-L-methionine = 2'-O-methyluridine(2552) in 23S rRNA + S-adenosyl-L-homocysteine + H(+). Functionally, specifically methylates the uridine in position 2552 of 23S rRNA at the 2'-O position of the ribose in the fully assembled 50S ribosomal subunit. This Haloarcula marismortui (strain ATCC 43049 / DSM 3752 / JCM 8966 / VKM B-1809) (Halobacterium marismortui) protein is Ribosomal RNA large subunit methyltransferase E.